Reading from the N-terminus, the 106-residue chain is MFCKHLSFVAITICFLLVLAKTENEIQQKNIKFDQRTWRNMRSNGYLALPRQGRSDNQPDYTCCGMPLTKYVGICPIGMECCPGLKKVLQKSGQRTIYSVCVADAY.

An N-terminal signal peptide occupies residues 1–20; the sequence is MFCKHLSFVAITICFLLVLA. The propeptide at 21-41 is amino-terminal spacer peptide; the sequence is KTENEIQQKNIKFDQRTWRNM. Position 52 is a glutamine amide (Q52). The propeptide at 55 to 106 is carboxy-terminal spacer peptide; it reads SDNQPDYTCCGMPLTKYVGICPIGMECCPGLKKVLQKSGQRTIYSVCVADAY.

Expression is seen in the peripheral and central nervous systems in tissues such as the brain, the inferior buccal ganglion, the gastric ganglion, the olfactory lobe, the peduncle lobe and the optic lobe. Expression in the brain is distributed in the median inferior frontal lobe, the superior buccal lobe, the prebranchial lobe and the pedal lobe. Not expressed in the vasomotor lobe or the palliovisceral lobe that controls the cardiac system.

It localises to the secreted. Functionally, evokes contractions in the radula protractor muscle, and may regulate feeding behavior and gut motility by controlling muscle contraction of the buccal mass. The chain is Small cardioactive peptide-related peptide from Octopus vulgaris (Common octopus).